Reading from the N-terminus, the 262-residue chain is Acetylglutamate kinase (262 aa).

Substrate contacts are provided by residues 48–49, Arg-70, and Asn-162; that span reads GG.

The protein belongs to the acetylglutamate kinase family. ArgB subfamily.

Its subcellular location is the cytoplasm. The enzyme catalyses N-acetyl-L-glutamate + ATP = N-acetyl-L-glutamyl 5-phosphate + ADP. Its pathway is amino-acid biosynthesis; L-arginine biosynthesis; N(2)-acetyl-L-ornithine from L-glutamate: step 2/4. Its function is as follows. Catalyzes the ATP-dependent phosphorylation of N-acetyl-L-glutamate. The sequence is that of Acetylglutamate kinase from Vibrio cholerae serotype O1 (strain ATCC 39541 / Classical Ogawa 395 / O395).